The chain runs to 287 residues: Heavy metal-associated isoprenylated plant protein 4 (287 aa).

HMA domains follow at residues 14–80 (IITA…VELI) and 112–176 (IRTT…KHAE). Residues Cys-25, Cys-28, Cys-123, and Cys-126 each coordinate a metal cation. Residues 179–235 (SSKTEEEKKKEEEDKKKKEEEDKKKKEDEKKKEEEKKKEEENKKKEGEKKKEEVKVE) are a coiled coil. Residues 181–232 (KTEEEKKKEEEDKKKKEEEDKKKKEDEKKKEEEKKKEEENKKKEGEKKKEEV) are disordered. Cys-284 carries the post-translational modification Cysteine methyl ester. Cys-284 carries S-farnesyl cysteine lipidation. Residues 285 to 287 (RIV) constitute a propeptide, removed in mature form.

This sequence belongs to the HIPP family.

Heavy-metal-binding protein. This is Heavy metal-associated isoprenylated plant protein 4 from Arabidopsis thaliana (Mouse-ear cress).